A 476-amino-acid polypeptide reads, in one-letter code: Protein DETOXIFICATION 4 (476 aa).

Helical transmembrane passes span 35–55 (AVPM…SVMV), 66–86 (GVAL…FGLV), 117–137 (IPIC…LISL), 154–174 (LIPT…LLAQ), 176–196 (LVLP…AVCW), 208–228 (GAAL…SCYV), 260–280 (AAML…SGLL), 289–309 (VLSI…GVAA), 332–352 (LAGL…LFAF), 370–390 (VADL…TAVL), 408–428 (VVAY…SCEL), and 433–453 (LWCG…IVTA).

It belongs to the multi antimicrobial extrusion (MATE) (TC 2.A.66.1) family.

Its subcellular location is the membrane. The chain is Protein DETOXIFICATION 4 from Arabidopsis thaliana (Mouse-ear cress).